A 2383-amino-acid polypeptide reads, in one-letter code: Reducing polyketide synthase rdc5 (2383 aa).

The Ketosynthase family 3 (KS3) domain maps to 10-438 (RAPIAIIGMS…GTNAHLVLER (429 aa)). Active-site for beta-ketoacyl synthase activity residues include Cys-186, His-321, and His-361. The malonyl-CoA:ACP transacylase (MAT) domain stretch occupies residues 550–881 (FVFTGQGAQW…GFAAELFRRG (332 aa)). The segment at 930–1066 (KSLIGAERPS…GLFSINYEDS (137 aa)) is N-terminal hotdog fold. The region spanning 930–1253 (KSLIGAERPS…LAELEVEDAD (324 aa)) is the PKS/mFAS DH domain. The dehydratase (DH) domain stretch occupies residues 932-1250 (LIGAERPSLD…DFHLAELEVE (319 aa)). His-962 functions as the Proton acceptor; for dehydratase activity in the catalytic mechanism. The tract at residues 1094–1253 (VEVISKQAFY…LAELEVEDAD (160 aa)) is C-terminal hotdog fold. The active-site Proton donor; for dehydratase activity is the Asp-1160. The enoyl reductase (ER) domain stretch occupies residues 1663–1977 (GLLNTLHFVS…QGKHVGKMIL (315 aa)). Residue Cys-1776 is the Phosphocysteine intermediate of the active site. The ketoreductase (KR) domain stretch occupies residues 2002 to 2182 (ATYLFIGGLG…VSVNLGIMRD (181 aa)). The region spanning 2300 to 2377 (AAGPIITKAL…QFAVQIAKKS (78 aa)) is the Carrier domain. At Ser-2337 the chain carries O-(pantetheine 4'-phosphoryl)serine.

It functions in the pathway secondary metabolite biosynthesis. Functionally, reducing polyketide synthase; part of the gene cluster that mediates the biosynthesis of radicicol, a resorcylic acid lactone (RAL) that irreversibly inhibits the HSP90 molecular chaperone, an important target for cancer chemotherapy. The radicicol cluster encodes only two apparent post-PKS enzymes, a cytochrome P450 monooxygenase (rdc4) and a non-heme halogenase (rdc2) that could introduce the epoxide and the chlorine, respectively. If this cluster includes all the genes required for radicicol biosynthesis, the remaining structural features of radicicol are presumably generated by the PKSs rdc1 and rdc5. The C-2' ketone could arise if the R-PKS rdc5 and NR-PKS rdc1 each carry out four iterations, in contrast to the five iteration-three iteration split for the hypothemycin PKSs. The origin of the cis 5',6' double bond is not known. The radicicol R-PKS rdc5 ER domain may catalyze either double bond isomerization or reduction in the third iteration. The protein is Reducing polyketide synthase rdc5 of Metacordyceps chlamydosporia (Nematophagous fungus).